The chain runs to 348 residues: Mannonate dehydratase (348 aa).

Belongs to the mannonate dehydratase family. Fe(2+) is required as a cofactor. It depends on Mn(2+) as a cofactor.

The enzyme catalyses D-mannonate = 2-dehydro-3-deoxy-D-gluconate + H2O. The protein operates within carbohydrate metabolism; pentose and glucuronate interconversion. Functionally, catalyzes the dehydration of D-mannonate. This is Mannonate dehydratase from Streptococcus uberis (strain ATCC BAA-854 / 0140J).